The sequence spans 545 residues: T-complex protein 1 subunit gamma (545 aa).

Position 1 is an N-acetylmethionine (Met1). Residues Met1–Ser24 are disordered. A Phosphoserine modification is found at Ser11. Residue Lys15 forms a Glycyl lysine isopeptide (Lys-Gly) (interchain with G-Cter in SUMO2) linkage. Gly42 provides a ligand contact to ADP. Gly42 is an ATP binding site. Mg(2+) is bound at residue Asp93. ADP is bound by residues Gly94, Thr95, Thr96, Ser97, Thr162, and Lys163. ATP is bound by residues Gly94, Thr95, and Thr96. Ser170 carries the phosphoserine modification. Position 222 is an N6-acetyllysine (Lys222). Phosphoserine occurs at positions 243 and 244. Tyr247 is subject to Phosphotyrosine. Glycyl lysine isopeptide (Lys-Gly) (interchain with G-Cter in SUMO2) cross-links involve residues Lys248 and Lys249. At Ser252 the chain carries Phosphoserine. A disulfide bridge links Cys366 with Cys372. Residue Lys381 forms a Glycyl lysine isopeptide (Lys-Gly) (interchain with G-Cter in SUMO2) linkage. Gly411 provides a ligand contact to ADP. An ATP-binding site is contributed by Gly411. A phosphothreonine mark is found at Thr430 and Thr459. ADP is bound by residues Gly482, Glu483, Glu497, and Lys502. Gly482 provides a ligand contact to ATP. An ATP-binding site is contributed by Glu497. Residues His526–Glu545 form a disordered region.

The protein belongs to the TCP-1 chaperonin family. Component of the chaperonin-containing T-complex (TRiC), a hexadecamer composed of two identical back-to-back stacked rings enclosing a protein folding chamber. Each ring is made up of eight different subunits: TCP1/CCT1, CCT2, CCT3, CCT4, CCT5, CCT6A/CCT6, CCT7, CCT8. Interacts with PACRG. Interacts with DNAAF4. Interacts with DLEC1.

Its subcellular location is the cytoplasm. The catalysed reaction is ATP + H2O = ADP + phosphate + H(+). Functionally, component of the chaperonin-containing T-complex (TRiC), a molecular chaperone complex that assists the folding of actin, tubulin and other proteins upon ATP hydrolysis. The TRiC complex mediates the folding of WRAP53/TCAB1, thereby regulating telomere maintenance. As part of the TRiC complex may play a role in the assembly of BBSome, a complex involved in ciliogenesis regulating transports vesicles to the cilia. The sequence is that of T-complex protein 1 subunit gamma (CCT3) from Pongo abelii (Sumatran orangutan).